The sequence spans 657 residues: Protein kinase and PP2C-like domain-containing protein (657 aa).

Positions 32 to 327 constitute a Protein kinase domain; it reads FSLLSPIAKG…LKIIEKHIAV (296 aa). ATP is bound by residues 38 to 46 and K59; that span reads IAKGSESTV. D156 functions as the Proton acceptor; for kinase activity in the catalytic mechanism. A PPM-type phosphatase domain is found at 390 to 647; sequence SWGSFATCGR…DNITVIVVFL (258 aa). Residues D426, G427, D598, and D638 each contribute to the Mn(2+) site.

It in the N-terminal section; belongs to the protein kinase superfamily. Ser/Thr protein kinase family. The protein in the C-terminal section; belongs to the PP2C family. Requires Mg(2+) as cofactor. Mn(2+) serves as cofactor.

The enzyme catalyses L-seryl-[protein] + ATP = O-phospho-L-seryl-[protein] + ADP + H(+). It carries out the reaction L-threonyl-[protein] + ATP = O-phospho-L-threonyl-[protein] + ADP + H(+). It catalyses the reaction O-phospho-L-seryl-[protein] + H2O = L-seryl-[protein] + phosphate. The catalysed reaction is O-phospho-L-threonyl-[protein] + H2O = L-threonyl-[protein] + phosphate. In Oryza sativa subsp. japonica (Rice), this protein is Protein kinase and PP2C-like domain-containing protein.